The chain runs to 714 residues: Phosphoribosylformylglycinamidine synthase subunit PurL (714 aa).

H34 is an active-site residue. Y37 is a binding site for ATP. Position 78 (E78) interacts with Mg(2+). Residues 79–82 (SHNH) and R101 contribute to the substrate site. The active-site Proton acceptor is H80. A Mg(2+)-binding site is contributed by D102. Q226 is a substrate binding site. D254 lines the Mg(2+) pocket. Position 298–300 (298–300 (ESQ)) interacts with substrate. Positions 474 and 511 each coordinate ATP. N512 contributes to the Mg(2+) binding site. S514 contacts substrate.

Belongs to the FGAMS family. Monomer. Part of the FGAM synthase complex composed of 1 PurL, 1 PurQ and 2 PurS subunits.

It is found in the cytoplasm. It catalyses the reaction N(2)-formyl-N(1)-(5-phospho-beta-D-ribosyl)glycinamide + L-glutamine + ATP + H2O = 2-formamido-N(1)-(5-O-phospho-beta-D-ribosyl)acetamidine + L-glutamate + ADP + phosphate + H(+). It participates in purine metabolism; IMP biosynthesis via de novo pathway; 5-amino-1-(5-phospho-D-ribosyl)imidazole from N(2)-formyl-N(1)-(5-phospho-D-ribosyl)glycinamide: step 1/2. Part of the phosphoribosylformylglycinamidine synthase complex involved in the purines biosynthetic pathway. Catalyzes the ATP-dependent conversion of formylglycinamide ribonucleotide (FGAR) and glutamine to yield formylglycinamidine ribonucleotide (FGAM) and glutamate. The FGAM synthase complex is composed of three subunits. PurQ produces an ammonia molecule by converting glutamine to glutamate. PurL transfers the ammonia molecule to FGAR to form FGAM in an ATP-dependent manner. PurS interacts with PurQ and PurL and is thought to assist in the transfer of the ammonia molecule from PurQ to PurL. The protein is Phosphoribosylformylglycinamidine synthase subunit PurL of Methanothermobacter thermautotrophicus (strain ATCC 29096 / DSM 1053 / JCM 10044 / NBRC 100330 / Delta H) (Methanobacterium thermoautotrophicum).